A 136-amino-acid polypeptide reads, in one-letter code: Large-conductance mechanosensitive channel (136 aa).

The Cytoplasmic segment spans residues 1 to 16; the sequence is MGLLSEFKAFAVKGNV. A helical membrane pass occupies residues 17-45; the sequence is VDMAVGIIIGAAFGKIVSSFVGDVIMPPI. Over 46-73 the chain is Extracellular; it reads GLLIGGVDFSDLAITLKAEGDVPAVVLA. The chain crosses the membrane as a helical span at residues 74-93; that stretch reads YRKFIQTVLNFVIVAFAIFM. The Cytoplasmic segment spans residues 94 to 136; sequence GVKAINRLKREEAVAPSEPPVPSAEETLLTEIRDLLKAQQNKS.

The protein belongs to the MscL family. As to quaternary structure, homopentamer.

It is found in the cell inner membrane. In terms of biological role, channel that opens in response to stretch forces in the membrane lipid bilayer. Forms a nonselective ion channel with a conductance of about 4 nanosiemens. May participate in the regulation of osmotic pressure changes within the cell. This chain is Large-conductance mechanosensitive channel, found in Pseudomonas fluorescens.